We begin with the raw amino-acid sequence, 327 residues long: GMP reductase (327 aa).

Cys176 functions as the Thioimidate intermediate in the catalytic mechanism. NADP(+) is bound at residue 205-228 (IIADGGIRTHGDIAKSIRFGASMV).

It belongs to the IMPDH/GMPR family. GuaC type 2 subfamily.

The catalysed reaction is IMP + NH4(+) + NADP(+) = GMP + NADPH + 2 H(+). In terms of biological role, catalyzes the irreversible NADPH-dependent deamination of GMP to IMP. It functions in the conversion of nucleobase, nucleoside and nucleotide derivatives of G to A nucleotides, and in maintaining the intracellular balance of A and G nucleotides. The chain is GMP reductase from Streptococcus pyogenes serotype M49 (strain NZ131).